Reading from the N-terminus, the 463-residue chain is Elongation factor 1-alpha (463 aa).

Residues 5–242 (KVHINIVVIG…DSIIPPQRPT (238 aa)) form the tr-type G domain. A G1 region spans residues 14–21 (GHVDSGKS). GTP is bound at residue 14–21 (GHVDSGKS). The interval 70-74 (GITID) is G2. The segment at 91–94 (DAPG) is G3. Residues 91-95 (DAPGH) and 153-156 (NKMD) contribute to the GTP site. Positions 153–156 (NKMD) are G4. Residues 194 to 196 (SGF) form a G5 region. 5-glutamyl glycerylphosphorylethanolamine occurs at positions 301 and 374. Residues 443–463 (KSDGSSGKVTKSAQKAAPKKK) are disordered. Over residues 446–455 (GSSGKVTKSA) the composition is skewed to polar residues.

Belongs to the TRAFAC class translation factor GTPase superfamily. Classic translation factor GTPase family. EF-Tu/EF-1A subfamily.

Its subcellular location is the cytoplasm. Functionally, this protein promotes the GTP-dependent binding of aminoacyl-tRNA to the A-site of ribosomes during protein biosynthesis. This Caenorhabditis elegans protein is Elongation factor 1-alpha.